The following is a 365-amino-acid chain: Ribosomal RNA large subunit methyltransferase F (365 aa).

Residues 1 to 48 (MSKPAVKSVQSATAKTATRAVNIRQKVKAPKQAKPEGKGSTKPVKDRP) form a disordered region. Over residues 33-48 (AKPEGKGSTKPVKDRP) the composition is skewed to basic and acidic residues.

Belongs to the methyltransferase superfamily. METTL16/RlmF family.

The protein resides in the cytoplasm. The catalysed reaction is adenosine(1618) in 23S rRNA + S-adenosyl-L-methionine = N(6)-methyladenosine(1618) in 23S rRNA + S-adenosyl-L-homocysteine + H(+). Functionally, specifically methylates the adenine in position 1618 of 23S rRNA. The protein is Ribosomal RNA large subunit methyltransferase F of Shewanella baltica (strain OS223).